The chain runs to 136 residues: Large ribosomal subunit protein uL16 (136 aa).

The protein belongs to the universal ribosomal protein uL16 family. In terms of assembly, part of the 50S ribosomal subunit.

Its function is as follows. Binds 23S rRNA and is also seen to make contacts with the A and possibly P site tRNAs. This chain is Large ribosomal subunit protein uL16, found in Psychromonas ingrahamii (strain DSM 17664 / CCUG 51855 / 37).